The primary structure comprises 677 residues: UvrABC system protein B (677 aa).

A Helicase ATP-binding domain is found at 26-414 (DNLDAGLAHQ…SGNEVVEQVV (389 aa)). 39-46 (GVTGSGKT) is a binding site for ATP. Residues 92–115 (YYDYYQPEAYVPTTDTFIEKDASI) carry the Beta-hairpin motif. The region spanning 432–598 (QVDDLMSEIR…GLNKDITDVM (167 aa)) is the Helicase C-terminal domain. Positions 637–672 (MKEIDAKEKEMYKAAQNLEFEQAGKLRDEVAELREQ) constitute a UVR domain.

This sequence belongs to the UvrB family. Forms a heterotetramer with UvrA during the search for lesions. Interacts with UvrC in an incision complex.

It is found in the cytoplasm. The UvrABC repair system catalyzes the recognition and processing of DNA lesions. A damage recognition complex composed of 2 UvrA and 2 UvrB subunits scans DNA for abnormalities. Upon binding of the UvrA(2)B(2) complex to a putative damaged site, the DNA wraps around one UvrB monomer. DNA wrap is dependent on ATP binding by UvrB and probably causes local melting of the DNA helix, facilitating insertion of UvrB beta-hairpin between the DNA strands. Then UvrB probes one DNA strand for the presence of a lesion. If a lesion is found the UvrA subunits dissociate and the UvrB-DNA preincision complex is formed. This complex is subsequently bound by UvrC and the second UvrB is released. If no lesion is found, the DNA wraps around the other UvrB subunit that will check the other stand for damage. This is UvrABC system protein B from Idiomarina loihiensis (strain ATCC BAA-735 / DSM 15497 / L2-TR).